We begin with the raw amino-acid sequence, 257 residues long: NAD kinase (257 aa).

The Proton acceptor role is filled by Asp44. Residues 44–45, Arg49, 116–117, Asp146, Ala154, and 157–162 each bind NAD(+); these read DG, NE, and TAYNLS.

It belongs to the NAD kinase family. The cofactor is a divalent metal cation.

Its subcellular location is the cytoplasm. The enzyme catalyses NAD(+) + ATP = ADP + NADP(+) + H(+). Functionally, involved in the regulation of the intracellular balance of NAD and NADP, and is a key enzyme in the biosynthesis of NADP. Catalyzes specifically the phosphorylation on 2'-hydroxyl of the adenosine moiety of NAD to yield NADP. The chain is NAD kinase from Rhizorhabdus wittichii (strain DSM 6014 / CCUG 31198 / JCM 15750 / NBRC 105917 / EY 4224 / RW1) (Sphingomonas wittichii).